Consider the following 1359-residue polypeptide: Tripeptidyl-peptidase 2 (1359 aa).

The tract at residues 45–81 (AASTTTRGGPSPSAGVAPRAMPSSSSSPPSAAEGTTA) is disordered. Residues 64 to 81 (AMPSSSSSPPSAAEGTTA) show a composition bias toward low complexity. The 499-residue stretch at 102-600 (EIGVDRFLAA…HGLLQVDRAF (499 aa)) folds into the Peptidase S8 domain. Residues aspartate 126, histidine 353, and serine 539 each act as charge relay system in the active site.

Belongs to the peptidase S8 family.

The catalysed reaction is Release of an N-terminal tripeptide from a polypeptide.. Functionally, serine protease that may function in the proteasome pathway. The sequence is that of Tripeptidyl-peptidase 2 (TPP2) from Oryza sativa subsp. japonica (Rice).